The chain runs to 163 residues: Nucleotide-binding protein GWCH70_0711 (163 aa).

Belongs to the YajQ family.

Nucleotide-binding protein. This Geobacillus sp. (strain WCH70) protein is Nucleotide-binding protein GWCH70_0711.